Reading from the N-terminus, the 210-residue chain is Outer-membrane lipoprotein carrier protein (210 aa).

The first 26 residues, 1–26 (MHMIRRAAGALAVFAVAALAAAPAWA), serve as a signal peptide directing secretion.

Belongs to the LolA family. As to quaternary structure, monomer.

The protein resides in the periplasm. Its function is as follows. Participates in the translocation of lipoproteins from the inner membrane to the outer membrane. Only forms a complex with a lipoprotein if the residue after the N-terminal Cys is not an aspartate (The Asp acts as a targeting signal to indicate that the lipoprotein should stay in the inner membrane). The polypeptide is Outer-membrane lipoprotein carrier protein (Bordetella pertussis (strain Tohama I / ATCC BAA-589 / NCTC 13251)).